The primary structure comprises 30 residues: Photosystem I reaction center subunit XII (30 aa).

Residues 7–29 (LIAFFLAFTAGILAIKLGQALYD) traverse the membrane as a helical segment.

This sequence belongs to the PsaM family.

Its subcellular location is the plastid. It localises to the chloroplast thylakoid membrane. This is Photosystem I reaction center subunit XII from Pinus thunbergii (Japanese black pine).